The primary structure comprises 744 residues: Prestin (744 aa).

Over 1 to 75 (MDHAEENEIL…PITKWLPAYK (75 aa)) the chain is Cytoplasmic. Residues 76–105 (FKEYVLGDLVSGISTGVLQLPQGLAFAMLA) form a helical membrane-spanning segment. The Extracellular portion of the chain corresponds to 106-108 (AVP). The helical transmembrane segment at 109-126 (PIFGLYSSFYPVIMYCFL) threads the bilayer. Topologically, residues 127 to 137 (GTSRHISIGPF) are cytoplasmic. Residues 138–151 (AVISLMIGGVAVRL) traverse the membrane as a helical segment. The Extracellular segment spans residues 152 to 168 (VPDDIVIPGGVNATNGT). The Involved in motor function signature appears at 158–168 (IPGGVNATNGT). 2 N-linked (GlcNAc...) asparagine glycosylation sites follow: N163 and N166. The chain crosses the membrane as a helical span at residues 169 to 196 (EARDALRVKVAMSVTLLSGIIQFCLGVC). The Cytoplasmic segment spans residues 197-206 (RFGFVAIYLT). The chain crosses the membrane as a helical span at residues 207 to 230 (EPLVRGFTTAAAVHVFTSMLKYLF). Over 231–241 (GVKTKRYSGIF) the chain is Extracellular. The segment at residues 242-253 (SVVYSTVAVLQN) is an intramembrane region (helical). At 254-258 (VKNLN) the chain is on the extracellular side. The helical transmembrane segment at 259 to 282 (VCSLGVGLMVFGLLLGGKEFNERF) threads the bilayer. The Cytoplasmic portion of the chain corresponds to 283–291 (KEKLPAPIP). The chain crosses the membrane as a helical span at residues 292 to 307 (LEFFAVVMGTGISAGF). Topologically, residues 308–332 (NLKESYNVDVVGTLPLGLLPPANPD) are extracellular. Residues 333–367 (TSLFHLVYVDAIAIAIVGFSVTISMAKTLANKHGY) traverse the membrane as a helical segment. The Cytoplasmic portion of the chain corresponds to 368-370 (QVD). The helical transmembrane segment at 371–388 (GNQELIALGLCNSIGSLF) threads the bilayer. Topologically, residues 389 to 396 (QTFSISCS) are extracellular. Residues 397 to 406 (LSRSLVQEGT) form a helical membrane-spanning segment. Salicylate is bound at residue S398. Over 407–410 (GGKT) the chain is Cytoplasmic. Residues 411 to 432 (QLAGCLASLMILLVILATGFLF) traverse the membrane as a helical segment. The Extracellular portion of the chain corresponds to 433–436 (ESLP). A helical transmembrane segment spans residues 437–464 (QAVLSAIVIVNLKGMFMQFSDLPFFWRT). S465 is a topological domain (cytoplasmic). A helical transmembrane segment spans residues 466 to 481 (KIELTIWLTTFVSSLF). The Extracellular portion of the chain corresponds to 482–483 (LG). The chain crosses the membrane as a helical span at residues 484 to 504 (LDYGLITAVIIALLTVIYRTQ). An extended region for STAS domain region spans residues 505-718 (SPSYKVLGKL…AVLGSQLREA (214 aa)). At 505–744 (SPSYKVLGKL…PNATPATPEA (240 aa)) the chain is on the cytoplasmic side. Residues 525-713 (AYEEVKEIPG…HSIHDAVLGS (189 aa)) form the STAS domain. Residues 718-744 (ALAEQEASAPPSQEDLEPNATPATPEA) are disordered.

Belongs to the SLC26A/SulP transporter (TC 2.A.53) family. Homodimer. Interacts (via STAS domain) with CALM; this interaction is calcium-dependent and the STAS domain interacts with only one lobe of CALM which is an elongated conformation. Interacts with MYH1.

The protein resides in the lateral cell membrane. It catalyses the reaction 2 hydrogencarbonate(in) + chloride(out) = 2 hydrogencarbonate(out) + chloride(in). Its function is as follows. Voltage-sensitive motor protein that drives outer hair cell (OHC) electromotility (eM) and participates in sound amplification in the hearing organ. Converts changes in the transmembrane electric potential into mechanical displacements resulting in the coupling of its expansion to movement of a charged voltage sensor across the lipid membrane. The nature of the voltage sensor is not completely clear, and two models compete. In the first model, acts as an incomplete transporter where intracellular chloride anion acts as extrinsic voltage sensor that drives conformational change in the protein which is sufficient to produce a length change in the plane of the membrane and hence in the length of the OHC. The second model in which multiple charged amino acid residues are distributed at the intracellular and extracellular membrane interfaces that form an intrinsic voltage sensor, whose movement produces the non-linear capacitance (NLC). However, the effective voltage sensor may be the result of a hybrid voltage sensor, assembled from intrinsic charge (charged residues) and extrinsic charge (bound anion). Notably, binding of anions to the anion-binding pocket partially neutralizes the intrinsic positive charge rather than to form an electrically negative sensor, therefore remaining charge may serve as voltage sensor that, after depolarization, moves from down (expanded state) to up (contracted) conformation, which is accompanied by an eccentric contraction of the intermembrane cross-sectional area of the protein as well as a major increase in the hydrophobic thickness of the protein having as consequences the plasma membrane thickening and the cell contraction after membrane depolarization. The anion-binding pocket transits from the inward-open (Down) state, where it is exposed toward the intracellular solvent in the absence of anion, to the occluded (Up) state upon anion binding. Salicylate competes for the anion-binding site and inhibits the voltage-sensor movement, and therefore inhibits the charge transfer and electromotility by displacing Cl(-) from the anion-binding site and by preventing the structural transitions to the contracted state. In addition, can act as a weak Cl(-)/HCO3(-) antiporter across the cell membrane and so regulate the intracellular pH of the outer hair cells (OHCs), while firstly found as being unable to mediate electrogenic anion transport. Moreover, supports a role in cardiac mechanical amplification serving as an elastic element to enhance the actomyosin- based sarcomere contraction system. The protein is Prestin of Homo sapiens (Human).